An 829-amino-acid chain; its full sequence is Periplasmic nitrate reductase (829 aa).

A signal peptide (tat-type signal) is located at residues 1–31; it reads MKLSRRDFMKANAVAAAAAAAGLTIPTVARA. Residues 40–96 form the 4Fe-4S Mo/W bis-MGD-type domain; it reads ITWDKAPCRFCGTGCGVLVGTQNGRIVASQGDPDAPVNRGLNCIKGYFLPKIMYGKD. C47, C50, C54, and C82 together coordinate [4Fe-4S] cluster. Residues K84, Q151, N176, C180, 213-220, 263-265, M373, Q377, N483, 509-510, K532, D559, and 719-728 each bind Mo-bis(molybdopterin guanine dinucleotide); these read WGSNMAEM, QSD, SD, and TGRVLEHWHT. F795 serves as a coordination point for substrate. Mo-bis(molybdopterin guanine dinucleotide) is bound by residues N803 and K820.

This sequence belongs to the prokaryotic molybdopterin-containing oxidoreductase family. NasA/NapA/NarB subfamily. In terms of assembly, component of the periplasmic nitrate reductase NapAB complex composed of NapA and NapB. [4Fe-4S] cluster serves as cofactor. The cofactor is Mo-bis(molybdopterin guanine dinucleotide). In terms of processing, predicted to be exported by the Tat system. The position of the signal peptide cleavage has not been experimentally proven.

Its subcellular location is the periplasm. The enzyme catalyses 2 Fe(II)-[cytochrome] + nitrate + 2 H(+) = 2 Fe(III)-[cytochrome] + nitrite + H2O. Its function is as follows. Catalytic subunit of the periplasmic nitrate reductase complex NapAB. Receives electrons from NapB and catalyzes the reduction of nitrate to nitrite. The sequence is that of Periplasmic nitrate reductase from Edwardsiella ictaluri (strain 93-146).